The sequence spans 452 residues: Cobyrinate a,c-diamide synthase (452 aa).

The region spanning 248-441 (RVAYALDAAF…LHIHFYQNLA (194 aa)) is the GATase cobBQ-type domain. Cysteine 330 functions as the Nucleophile in the catalytic mechanism.

The protein belongs to the CobB/CbiA family. Mg(2+) serves as cofactor.

The catalysed reaction is cob(II)yrinate + 2 L-glutamine + 2 ATP + 2 H2O = cob(II)yrinate a,c diamide + 2 L-glutamate + 2 ADP + 2 phosphate + 2 H(+). It functions in the pathway cofactor biosynthesis; adenosylcobalamin biosynthesis; cob(II)yrinate a,c-diamide from sirohydrochlorin (anaerobic route): step 10/10. Functionally, catalyzes the ATP-dependent amidation of the two carboxylate groups at positions a and c of cobyrinate, using either L-glutamine or ammonia as the nitrogen source. This chain is Cobyrinate a,c-diamide synthase, found in Listeria monocytogenes serovar 1/2a (strain ATCC BAA-679 / EGD-e).